The primary structure comprises 131 residues: Profilin-2 (131 aa).

This sequence belongs to the profilin family. Occurs in many kinds of cells as a complex with monomeric actin in a 1:1 ratio.

It localises to the cytoplasm. Its subcellular location is the cytoskeleton. Functionally, binds to actin and affects the structure of the cytoskeleton. At high concentrations, profilin prevents the polymerization of actin, whereas it enhances it at low concentrations. By binding to PIP2, it inhibits the formation of IP3 and DG. The protein is Profilin-2 of Lilium longiflorum (Trumpet lily).